Here is an 89-residue protein sequence, read N- to C-terminus: Small ribosomal subunit protein uS15 (89 aa).

The segment covering 1–21 (MALSPEKKNEIIENFKTHEGD) has biased composition (basic and acidic residues). The disordered stretch occupies residues 1-23 (MALSPEKKNEIIENFKTHEGDTG).

It belongs to the universal ribosomal protein uS15 family. In terms of assembly, part of the 30S ribosomal subunit. Forms a bridge to the 50S subunit in the 70S ribosome, contacting the 23S rRNA.

Its function is as follows. One of the primary rRNA binding proteins, it binds directly to 16S rRNA where it helps nucleate assembly of the platform of the 30S subunit by binding and bridging several RNA helices of the 16S rRNA. In terms of biological role, forms an intersubunit bridge (bridge B4) with the 23S rRNA of the 50S subunit in the ribosome. The polypeptide is Small ribosomal subunit protein uS15 (Desulforamulus reducens (strain ATCC BAA-1160 / DSM 100696 / MI-1) (Desulfotomaculum reducens)).